Consider the following 289-residue polypeptide: 2-dehydro-3-deoxyphosphooctonate aldolase (289 aa).

This sequence belongs to the KdsA family.

It is found in the cytoplasm. The catalysed reaction is D-arabinose 5-phosphate + phosphoenolpyruvate + H2O = 3-deoxy-alpha-D-manno-2-octulosonate-8-phosphate + phosphate. It participates in carbohydrate biosynthesis; 3-deoxy-D-manno-octulosonate biosynthesis; 3-deoxy-D-manno-octulosonate from D-ribulose 5-phosphate: step 2/3. Its pathway is bacterial outer membrane biogenesis; lipopolysaccharide biosynthesis. This chain is 2-dehydro-3-deoxyphosphooctonate aldolase, found in Cupriavidus taiwanensis (strain DSM 17343 / BCRC 17206 / CCUG 44338 / CIP 107171 / LMG 19424 / R1) (Ralstonia taiwanensis (strain LMG 19424)).